The primary structure comprises 95 residues: MSYTIPAQTRTEIGKGSSRRLRREGKVPAVIYGVGKEPVSIVFDHKDIINIQANDDFYTSVLTIVLDGKEVNVRAQAMQRHVFKPMIDHVDFVYA.

This sequence belongs to the bacterial ribosomal protein bL25 family. Part of the 50S ribosomal subunit; part of the 5S rRNA/L5/L18/L25 subcomplex. Contacts the 5S rRNA. Binds to the 5S rRNA independently of L5 and L18.

Its function is as follows. This is one of the proteins that binds to the 5S RNA in the ribosome where it forms part of the central protuberance. The sequence is that of Large ribosomal subunit protein bL25 from Shewanella amazonensis (strain ATCC BAA-1098 / SB2B).